Consider the following 154-residue polypeptide: PTS system fructose-specific EIIA component (154 aa).

One can recognise a PTS EIIA type-2 domain in the interval 8-152; that stretch reads TITPLELISL…QTVQDVLAEV (145 aa). Catalysis depends on His-70, which acts as the Tele-phosphohistidine intermediate. Position 70 is a phosphohistidine; by HPr (His-70).

It is found in the cytoplasm. Its function is as follows. The phosphoenolpyruvate-dependent sugar phosphotransferase system (sugar PTS), a major carbohydrate active transport system, catalyzes the phosphorylation of incoming sugar substrates concomitantly with their translocation across the cell membrane. The enzyme II PtfABC PTS system is involved in fructose transport. The chain is PTS system fructose-specific EIIA component from Haloferax volcanii (strain ATCC 29605 / DSM 3757 / JCM 8879 / NBRC 14742 / NCIMB 2012 / VKM B-1768 / DS2) (Halobacterium volcanii).